The following is a 125-amino-acid chain: Large ribosomal subunit protein bL19 (125 aa).

It belongs to the bacterial ribosomal protein bL19 family.

In terms of biological role, this protein is located at the 30S-50S ribosomal subunit interface and may play a role in the structure and function of the aminoacyl-tRNA binding site. The polypeptide is Large ribosomal subunit protein bL19 (Ehrlichia chaffeensis (strain ATCC CRL-10679 / Arkansas)).